Here is a 135-residue protein sequence, read N- to C-terminus: Regulator of ribonuclease activity B (135 aa).

The segment at 114–135 (WGTYFESDEDDEEDESEDKPEA) is disordered. Residues 119–135 (ESDEDDEEDESEDKPEA) are compositionally biased toward acidic residues.

The protein belongs to the RraB family. In terms of assembly, interacts with the C-terminal region of Rne.

It is found in the cytoplasm. In terms of biological role, globally modulates RNA abundance by binding to RNase E (Rne) and regulating its endonucleolytic activity. Can modulate Rne action in a substrate-dependent manner by altering the composition of the degradosome. The protein is Regulator of ribonuclease activity B of Photobacterium profundum (strain SS9).